Here is a 385-residue protein sequence, read N- to C-terminus: Chaperone protein DnaJ (385 aa).

Residues 5–70 (DYYEVLGVAK…QKRAAYDRFG (66 aa)) enclose the J domain. Residues 141–219 (GKTETIRIPT…CSGAGRVNRE (79 aa)) form a CR-type zinc finger. Zn(2+)-binding residues include C154, C157, C171, C174, C193, C196, C207, and C210. CXXCXGXG motif repeat units follow at residues 154–161 (CETCSGTG), 171–178 (CSTCGGYG), 193–200 (CPNCHGRG), and 207–214 (CTACSGAG).

It belongs to the DnaJ family. In terms of assembly, homodimer. The cofactor is Zn(2+).

It is found in the cytoplasm. Functionally, participates actively in the response to hyperosmotic and heat shock by preventing the aggregation of stress-denatured proteins and by disaggregating proteins, also in an autonomous, DnaK-independent fashion. Unfolded proteins bind initially to DnaJ; upon interaction with the DnaJ-bound protein, DnaK hydrolyzes its bound ATP, resulting in the formation of a stable complex. GrpE releases ADP from DnaK; ATP binding to DnaK triggers the release of the substrate protein, thus completing the reaction cycle. Several rounds of ATP-dependent interactions between DnaJ, DnaK and GrpE are required for fully efficient folding. Also involved, together with DnaK and GrpE, in the DNA replication of plasmids through activation of initiation proteins. This Methylorubrum extorquens (strain PA1) (Methylobacterium extorquens) protein is Chaperone protein DnaJ.